We begin with the raw amino-acid sequence, 378 residues long: Signal recognition particle receptor FtsY (378 aa).

GTP contacts are provided by residues 184-191 (GVNGTGKT), 266-270 (DTAGR), and 330-333 (TKLD).

It belongs to the GTP-binding SRP family. FtsY subfamily. Part of the signal recognition particle protein translocation system, which is composed of SRP and FtsY. SRP is a ribonucleoprotein composed of Ffh and a 4.5S RNA molecule.

The protein localises to the cell membrane. It is found in the cytoplasm. It catalyses the reaction GTP + H2O = GDP + phosphate + H(+). In terms of biological role, involved in targeting and insertion of nascent membrane proteins into the cytoplasmic membrane. Acts as a receptor for the complex formed by the signal recognition particle (SRP) and the ribosome-nascent chain (RNC). Interaction with SRP-RNC leads to the transfer of the RNC complex to the Sec translocase for insertion into the membrane, the hydrolysis of GTP by both Ffh and FtsY, and the dissociation of the SRP-FtsY complex into the individual components. The chain is Signal recognition particle receptor FtsY from Buchnera aphidicola subsp. Acyrthosiphon pisum (strain APS) (Acyrthosiphon pisum symbiotic bacterium).